We begin with the raw amino-acid sequence, 360 residues long: Inward rectifier potassium channel 13 (360 aa).

The Cytoplasmic portion of the chain corresponds to 1-50; that stretch reads MDSRNCKVNAPLLSQRYRRMVTKDGHSTLQMDGAQRGLVYLRDAWGILMD. The helical transmembrane segment at 51–77 threads the bilayer; the sequence is MRWRWMMLVFSASFVVHWLVFAVLWYA. Topologically, residues 78 to 105 are extracellular; the sequence is VAEMNGDLEIDHDVPPENHTICVKHITS. The helical; Pore-forming intramembrane region spans 106-122; sequence FTAAFSFSLETQLTIGY. Positions 119–124 match the Selectivity filter motif; the sequence is TIGYGT. The Extracellular segment spans residues 123 to 131; that stretch reads GTMFPSGDC. The helical transmembrane segment at 132–157 threads the bilayer; sequence PSAIALLAIQMLLGLMLEAFITGAFV. At 158–360 the chain is on the cytoplasmic side; that stretch reads AKIARPKNRA…FQIAETGLTE (203 aa). Serine 201 carries the post-translational modification Phosphoserine; by PKC. A Phosphoserine; by PKA modification is found at serine 287.

Belongs to the inward rectifier-type potassium channel (TC 1.A.2.1) family. KCNJ13 subfamily. As to quaternary structure, homotetramer. Interacts with RAB28; the interaction may facilitate cone outer segments phagocytosis. Phosphorylation at Ser-201 by PKC strongly inhibits ionic currents, while phosphorylation at Ser-287 by PKA increases them.

It localises to the membrane. The protein localises to the cell membrane. The catalysed reaction is K(+)(in) = K(+)(out). Its activity is regulated as follows. Inhibited by Ba(2+) and Cs(+), although sensitivity to those inhibitors is much lower than in other Kir channels. Inward rectifier potassium channels are characterized by a greater tendency to allow potassium to flow into the cell rather than out of it. Their voltage dependence is regulated by the concentration of extracellular potassium; as external potassium is raised, the voltage range of the channel opening shifts to more positive voltages. The inward rectification is mainly due to the blockage of outward current by internal magnesium. KCNJ13 has a very low single channel conductance, low sensitivity to block by external barium and cesium, and no dependence of its inward rectification properties on the internal blocking particle magnesium. This Rattus norvegicus (Rat) protein is Inward rectifier potassium channel 13 (Kcnj13).